The chain runs to 681 residues: Transketolase 2 (681 aa).

Position 30 (His-30) interacts with substrate. Thiamine diphosphate-binding positions include His-69 and 116 to 118 (GPL). Asp-157 provides a ligand contact to Mg(2+). Gly-158 and Asn-187 together coordinate thiamine diphosphate. 2 residues coordinate Mg(2+): Asn-187 and Ile-189. Substrate contacts are provided by His-263, Arg-359, and Ser-386. His-263 provides a ligand contact to thiamine diphosphate. Positions 418 and 445 each coordinate thiamine diphosphate. Glu-418 functions as the Proton donor in the catalytic mechanism. Substrate contacts are provided by His-469, Asp-477, and Arg-528.

It belongs to the transketolase family. As to quaternary structure, homodimer. Mg(2+) serves as cofactor. Requires Ca(2+) as cofactor. It depends on Mn(2+) as a cofactor. The cofactor is Co(2+). Thiamine diphosphate is required as a cofactor.

The enzyme catalyses D-sedoheptulose 7-phosphate + D-glyceraldehyde 3-phosphate = aldehydo-D-ribose 5-phosphate + D-xylulose 5-phosphate. Catalyzes the transfer of a two-carbon ketol group from a ketose donor to an aldose acceptor, via a covalent intermediate with the cofactor thiamine pyrophosphate. This chain is Transketolase 2 (TKL2), found in Saccharomyces cerevisiae (strain ATCC 204508 / S288c) (Baker's yeast).